The primary structure comprises 136 residues: Mitochondrial pyruvate carrier 1-like protein (136 aa).

At 2 to 19 (ARMAVLWRKMRDNFQSKE) the chain is on the mitochondrial matrix side. A helical membrane pass occupies residues 20–42 (FREYVSSTHFWGPAFSWGLPLAA). The Mother cell cytoplasmic segment spans residues 43-51 (FKDMKASPE). The chain crosses the membrane as a helical span at residues 52-74 (IISGRMTTALILYSAIFMRFAYR). At 75–136 (VQPRNLLLMA…PGSQPPKQAS (62 aa)) the chain is on the mitochondrial matrix side. The tract at residues 111–136 (EAKARDPPATAAAATSPGSQPPKQAS) is disordered. The span at 117–136 (PPATAAAATSPGSQPPKQAS) shows a compositional bias: low complexity.

The protein belongs to the mitochondrial pyruvate carrier (MPC) (TC 2.A.105) family.

It localises to the mitochondrion inner membrane. It catalyses the reaction pyruvate(out) + H(+)(out) = pyruvate(in) + H(+)(in). In terms of biological role, mediates the uptake of pyruvate into mitochondria. The chain is Mitochondrial pyruvate carrier 1-like protein (MPC1L) from Homo sapiens (Human).